A 431-amino-acid chain; its full sequence is UPF0597 protein BVU_2091 (431 aa).

Belongs to the UPF0597 family.

This Phocaeicola vulgatus (strain ATCC 8482 / DSM 1447 / JCM 5826 / CCUG 4940 / NBRC 14291 / NCTC 11154) (Bacteroides vulgatus) protein is UPF0597 protein BVU_2091.